The chain runs to 229 residues: Germin-like protein 2-4 (229 aa).

The first 23 residues, 1 to 23 (MAHRRRCLLLLLAVLLPAMAARG), serve as a signal peptide directing secretion. Cysteine 32 and cysteine 52 are oxidised to a cystine. A glycan (N-linked (GlcNAc...) asparagine) is linked at asparagine 57. A Cupin type-1 domain is found at 66–213 (SGVRAAGNFS…AFGLTPAELR (148 aa)). Mn(2+) contacts are provided by histidine 115, histidine 117, glutamate 122, and histidine 161.

This sequence belongs to the germin family. In terms of assembly, oligomer (believed to be a pentamer but probably hexamer).

The protein localises to the secreted. It localises to the extracellular space. Its subcellular location is the apoplast. In terms of biological role, may play a role in plant defense. Probably has no oxalate oxidase activity even if the active site is conserved. This is Germin-like protein 2-4 from Oryza sativa subsp. japonica (Rice).